A 250-amino-acid chain; its full sequence is tRNA pseudouridine synthase A (250 aa).

The active-site Nucleophile is the Asp-52. Tyr-111 serves as a coordination point for substrate.

Belongs to the tRNA pseudouridine synthase TruA family. Homodimer.

It carries out the reaction uridine(38/39/40) in tRNA = pseudouridine(38/39/40) in tRNA. Functionally, formation of pseudouridine at positions 38, 39 and 40 in the anticodon stem and loop of transfer RNAs. The polypeptide is tRNA pseudouridine synthase A (Methylorubrum extorquens (strain PA1) (Methylobacterium extorquens)).